Here is a 484-residue protein sequence, read N- to C-terminus: tRNA-2-methylthio-N(6)-dimethylallyladenosine synthase (484 aa).

The MTTase N-terminal domain maps to 36–153 (GKLYIKTHGC…LPELIRARRE (118 aa)). Residues C45, C82, C116, C190, C194, and C197 each coordinate [4Fe-4S] cluster. In terms of domain architecture, Radical SAM core spans 176–415 (RAEGPSAFVS…HINAHAASIS (240 aa)). The region spanning 416 to 479 (QSMVGSVQRV…SNSLRGRIQL (64 aa)) is the TRAM domain. The tract at residues 428 to 450 (EGPSRRDPNELTGKSENMRPVNF) is disordered.

Belongs to the methylthiotransferase family. MiaB subfamily. Monomer. It depends on [4Fe-4S] cluster as a cofactor.

Its subcellular location is the cytoplasm. It catalyses the reaction N(6)-dimethylallyladenosine(37) in tRNA + (sulfur carrier)-SH + AH2 + 2 S-adenosyl-L-methionine = 2-methylsulfanyl-N(6)-dimethylallyladenosine(37) in tRNA + (sulfur carrier)-H + 5'-deoxyadenosine + L-methionine + A + S-adenosyl-L-homocysteine + 2 H(+). In terms of biological role, catalyzes the methylthiolation of N6-(dimethylallyl)adenosine (i(6)A), leading to the formation of 2-methylthio-N6-(dimethylallyl)adenosine (ms(2)i(6)A) at position 37 in tRNAs that read codons beginning with uridine. This is tRNA-2-methylthio-N(6)-dimethylallyladenosine synthase from Xanthomonas euvesicatoria pv. vesicatoria (strain 85-10) (Xanthomonas campestris pv. vesicatoria).